A 173-amino-acid polypeptide reads, in one-letter code: Membrane protein PM19L (173 aa).

Transmembrane regions (helical) follow at residues 9 to 29, 43 to 63, 83 to 103, and 124 to 144; these read IAPL…FASW, GVAG…AGVV, LAAG…AFGL, and FVII…GGLF.

As to expression, expressed in roots, leaf blades, leaf sheaths, stems, spikelets and embryos.

It is found in the membrane. Its function is as follows. May be involved in abiotic stress response through abscisic acid-dependent signaling. In Oryza sativa subsp. japonica (Rice), this protein is Membrane protein PM19L.